Consider the following 1322-residue polypeptide: Serine/threonine-protein phosphatase UIS2 (1322 aa).

An N-terminal signal peptide occupies residues 1-22; the sequence is MNISKFFLIFIPLVLFKYPANN. Positions 1–535 are interaction with phosphorylated eIF2alpha; it reads MNISKFFLIF…NELKSTSNAM (535 aa). Composition is skewed to basic and acidic residues over residues 267–279 and 288–326; these read EKSA…KELN and NSKK…KSEN. Disordered stretches follow at residues 267–326, 613–646, 1066–1087, and 1170–1196; these read EKSA…KSEN, NTNT…SENN, NETP…IQPN, and EVPD…NKDD. A compositionally biased stretch (low complexity) spans 631–646; sequence NNYTDGNEGNNNSENN.

The cofactor is Mn(2+).

The enzyme catalyses O-phospho-L-seryl-[protein] + H2O = L-seryl-[protein] + phosphate. In terms of biological role, protein phosphatase which dephosphorylates 'Ser-59' of translation factor eIF2alpha during the liver stage, thus enabling protein translation. This Plasmodium berghei (strain Anka) protein is Serine/threonine-protein phosphatase UIS2.